A 90-amino-acid polypeptide reads, in one-letter code: MARVTVQDAVEKVGNRFDLVLIAARRARQMQTGGKDSLVPEENDKPTVIALREIEEGLITKEVLDARERQEQQEQEAAELAAVSSIARNR.

A disordered region spans residues 69 to 90; sequence RQEQQEQEAAELAAVSSIARNR.

It belongs to the RNA polymerase subunit omega family. As to quaternary structure, the RNAP catalytic core consists of 2 alpha, 1 beta, 1 beta' and 1 omega subunit. When a sigma factor is associated with the core the holoenzyme is formed, which can initiate transcription.

It catalyses the reaction RNA(n) + a ribonucleoside 5'-triphosphate = RNA(n+1) + diphosphate. Its function is as follows. Promotes RNA polymerase assembly. Latches the N- and C-terminal regions of the beta' subunit thereby facilitating its interaction with the beta and alpha subunits. This Vibrio vulnificus (strain CMCP6) protein is DNA-directed RNA polymerase subunit omega.